We begin with the raw amino-acid sequence, 280 residues long: 4-diphosphocytidyl-2-C-methyl-D-erythritol kinase (280 aa).

Lysine 8 is an active-site residue. 91–101 (PVSAGLAGGSS) lines the ATP pocket. Aspartate 133 is a catalytic residue.

Belongs to the GHMP kinase family. IspE subfamily.

It carries out the reaction 4-CDP-2-C-methyl-D-erythritol + ATP = 4-CDP-2-C-methyl-D-erythritol 2-phosphate + ADP + H(+). It functions in the pathway isoprenoid biosynthesis; isopentenyl diphosphate biosynthesis via DXP pathway; isopentenyl diphosphate from 1-deoxy-D-xylulose 5-phosphate: step 3/6. In terms of biological role, catalyzes the phosphorylation of the position 2 hydroxy group of 4-diphosphocytidyl-2C-methyl-D-erythritol. The chain is 4-diphosphocytidyl-2-C-methyl-D-erythritol kinase from Clostridium novyi (strain NT).